The chain runs to 92 residues: Secreted RxLR effector protein RXLR-C02 (92 aa).

Residues 1–21 form the signal peptide; the sequence is MQFHLLVMTTIAASFAATGSA. Positions 48–51 match the RxLR motif; the sequence is RALR. Residues 54–75 form a disordered region; the sequence is ENRGLIGDDSDSSISDSDSEAK.

This sequence belongs to the RxLR effector family.

The protein resides in the secreted. Its subcellular location is the host cytoplasm. The protein localises to the host nucleus. Functionally, secreted effector that suppresses pattern-triggered immunity (PTI) in plant host. In Plasmopara halstedii (Downy mildew of sunflower), this protein is Secreted RxLR effector protein RXLR-C02.